Reading from the N-terminus, the 241-residue chain is Glycerol-3-phosphate acyltransferase (241 aa).

The next 6 membrane-spanning stretches (helical) occupy residues 3-23, 63-83, 97-117, 131-151, 156-176, and 198-218; these read ILYS…LLGS, IVFA…SAIV, YISP…PAYY, LIIS…LLVV, IVSL…WMPW, and LVNY…LVLV.

Belongs to the PlsY family. In terms of assembly, probably interacts with PlsX.

The protein localises to the cell membrane. The catalysed reaction is an acyl phosphate + sn-glycerol 3-phosphate = a 1-acyl-sn-glycero-3-phosphate + phosphate. It participates in lipid metabolism; phospholipid metabolism. Its function is as follows. Catalyzes the transfer of an acyl group from acyl-phosphate (acyl-PO(4)) to glycerol-3-phosphate (G3P) to form lysophosphatidic acid (LPA). This enzyme utilizes acyl-phosphate as fatty acyl donor, but not acyl-CoA or acyl-ACP. The chain is Glycerol-3-phosphate acyltransferase from Mycoplasmopsis agalactiae (strain NCTC 10123 / CIP 59.7 / PG2) (Mycoplasma agalactiae).